We begin with the raw amino-acid sequence, 147 residues long: MADFDAVLKFWGPVEADYDKIGNMVLTRLFTEHPDTQKLFPKFAGIGLGDMAGNAAISAHGATVLKKLAEVLKAKGNHAGIIKPLANSHATKHKIAINNFKLITEIIVKVMQEKAGLDAGGQTALRNVMGVFIADMDANYKELGFSG.

Residues 2–141 (ADFDAVLKFW…FIADMDANYK (140 aa)) enclose the Globin domain. His-60 contributes to the nitrite binding site. His-60 is a binding site for O2. His-89 contacts heme b.

The protein belongs to the globin family. Monomeric.

It localises to the cytoplasm. Its subcellular location is the sarcoplasm. It catalyses the reaction Fe(III)-heme b-[protein] + nitric oxide + H2O = Fe(II)-heme b-[protein] + nitrite + 2 H(+). The catalysed reaction is H2O2 + AH2 = A + 2 H2O. Monomeric heme protein which primary function is to store oxygen and facilitate its diffusion within muscle tissues. Reversibly binds oxygen through a pentacoordinated heme iron and enables its timely and efficient release as needed during periods of heightened demand. Depending on the oxidative conditions of tissues and cells, and in addition to its ability to bind oxygen, it also has a nitrite reductase activity whereby it regulates the production of bioactive nitric oxide. Under stress conditions, like hypoxia and anoxia, it also protects cells against reactive oxygen species thanks to its pseudoperoxidase activity. The sequence is that of Myoglobin (mb) from Scomber japonicus (Chub mackerel).